The following is a 132-amino-acid chain: Small ribosomal subunit protein uS8 (132 aa).

Belongs to the universal ribosomal protein uS8 family. Part of the 30S ribosomal subunit. Contacts proteins S5 and S12.

Functionally, one of the primary rRNA binding proteins, it binds directly to 16S rRNA central domain where it helps coordinate assembly of the platform of the 30S subunit. In Enterococcus faecalis (strain ATCC 700802 / V583), this protein is Small ribosomal subunit protein uS8.